The primary structure comprises 362 residues: Homeobox protein extradenticle (362 aa).

The 192-residue stretch at 34 to 225 (PRKQDIGEIL…VMILRSRFLD (192 aa)) folds into the PBC domain. Positions 41 to 120 (EILQQIMNIT…EGVAGPEKGG (80 aa)) are PBC-A. Residues 123–225 (DFLSQSDLTG…VMILRSRFLD (103 aa)) are PBC-B. The homeobox; TALE-type DNA-binding region spans 226-288 (ARRKRRNFSK…NKRIRYKKNI (63 aa)). A disordered region spans residues 305 to 362 (GASPYSMGGPPSGAATPMMSPAPAQDSMGYSLGSGGYDQQQPYDGSMGYDQLHQDLSP).

The protein belongs to the TALE/PBX homeobox family.

Its subcellular location is the nucleus. Transcription factor which acts with the selector homeodomain proteins altering the regulation of downstream target genes such as wingless (wg), teashirt (tsh) and decapentaplegic (dpp), thus affecting segmental identity. This chain is Homeobox protein extradenticle, found in Anopheles gambiae (African malaria mosquito).